Consider the following 343-residue polypeptide: Probable xyloglucan endotransglucosylase/hydrolase protein 30 (343 aa).

An N-terminal signal peptide occupies residues 1 to 23 (MSKSSYNHIFILILCLCLRSSSA). A GH16 domain is found at 24 to 224 (FTNLNTLSFE…YKFAPFVAEF (201 aa)). The active-site Nucleophile is the glutamate 109. The Proton donor role is filled by glutamate 113. Residues glutamate 113 and 126–128 (QTN) each bind xyloglucan. N-linked (GlcNAc...) asparagine glycosylation occurs at asparagine 132. Xyloglucan is bound by residues 136 to 140 (HRGRE), 203 to 204 (DW), glycine 208, and arginine 285. Cysteine 280 and cysteine 293 are oxidised to a cystine. A disordered region spans residues 306-343 (TGRLKFGGTEARERRRNRRQQRRPEIEIESDPDDRKLL).

Belongs to the glycosyl hydrolase 16 family. XTH group 3 subfamily. Post-translationally, contains at least one intrachain disulfide bond essential for its enzymatic activity. Predominantly expressed in green siliques.

It is found in the secreted. The protein resides in the cell wall. It localises to the extracellular space. The protein localises to the apoplast. It carries out the reaction breaks a beta-(1-&gt;4) bond in the backbone of a xyloglucan and transfers the xyloglucanyl segment on to O-4 of the non-reducing terminal glucose residue of an acceptor, which can be a xyloglucan or an oligosaccharide of xyloglucan.. In terms of biological role, catalyzes xyloglucan endohydrolysis (XEH) and/or endotransglycosylation (XET). Cleaves and religates xyloglucan polymers, an essential constituent of the primary cell wall, and thereby participates in cell wall construction of growing tissues. In Arabidopsis thaliana (Mouse-ear cress), this protein is Probable xyloglucan endotransglucosylase/hydrolase protein 30 (XTH30).